The primary structure comprises 640 residues: 1-deoxy-D-xylulose-5-phosphate synthase (640 aa).

Residues H75 and 117–119 (GHA) each bind thiamine diphosphate. D146 contributes to the Mg(2+) binding site. Thiamine diphosphate-binding positions include 147 to 148 (AA), N175, and E370. N175 provides a ligand contact to Mg(2+).

It belongs to the transketolase family. DXPS subfamily. Homodimer. Mg(2+) serves as cofactor. It depends on thiamine diphosphate as a cofactor.

It catalyses the reaction D-glyceraldehyde 3-phosphate + pyruvate + H(+) = 1-deoxy-D-xylulose 5-phosphate + CO2. It participates in metabolic intermediate biosynthesis; 1-deoxy-D-xylulose 5-phosphate biosynthesis; 1-deoxy-D-xylulose 5-phosphate from D-glyceraldehyde 3-phosphate and pyruvate: step 1/1. In terms of biological role, catalyzes the acyloin condensation reaction between C atoms 2 and 3 of pyruvate and glyceraldehyde 3-phosphate to yield 1-deoxy-D-xylulose-5-phosphate (DXP). The sequence is that of 1-deoxy-D-xylulose-5-phosphate synthase from Chlamydia trachomatis serovar A (strain ATCC VR-571B / DSM 19440 / HAR-13).